Here is a 446-residue protein sequence, read N- to C-terminus: MTEQKRKIEKLTGVKGMNDILPQDAGLWEFFEATVKSLLRAYGYQNIRTPIVEHTQLFTRGIGEVTDIVEKEMYSFTDALNGENLTMRPENTAAVVRASIEHNMLYDGPKRLWYIGPMFRHERPQRGRYRQFHQVGVEALGFAGPDADAEIIMMCQRLWDDLGLTGIKLEINSLGLAEERAAHRVELIKYLEQFADVLDEDAKRRLYTNPLRVLDTKNPALQDIAQNAPKLIDFLGDESRAHFEGLQRLLLANNIPFKINPRLVRGLDYYNLTVFEWVTDKLGAQGTVAAGGRYDPLIEQLGGKPTAACGWAMGIERILELLKEEDLAPEQEGVDVYVVHQGETAREQAFIAAERLRDTGLDVIFHCSADGAPASFKSQMKRADASGAAFAVIFGEEEVANGTVGVKALRGAGAEGEKNVQQTVPVESLTEFLINAMVASAEDGDD.

It belongs to the class-II aminoacyl-tRNA synthetase family. In terms of assembly, homodimer.

Its subcellular location is the cytoplasm. The enzyme catalyses tRNA(His) + L-histidine + ATP = L-histidyl-tRNA(His) + AMP + diphosphate + H(+). In Burkholderia cenocepacia (strain ATCC BAA-245 / DSM 16553 / LMG 16656 / NCTC 13227 / J2315 / CF5610) (Burkholderia cepacia (strain J2315)), this protein is Histidine--tRNA ligase.